The chain runs to 263 residues: Pollen allergen Phl p 1 (263 aa).

The first 23 residues, Met1–Gly23, serve as a signal peptide directing secretion. Asn32 is a glycosylation site (N-linked (GlcNAc...) asparagine). An Expansin-like EG45 domain is found at Gly61–Gly167. Disulfide bonds link Cys64–Cys92, Cys95–Cys162, and Cys100–Cys106. The 82-residue stretch at Asn181–Ser262 folds into the Expansin-like CBD domain.

The protein belongs to the expansin family. Expansin B subfamily. As to quaternary structure, homodimer.

Its subcellular location is the secreted. The polypeptide is Pollen allergen Phl p 1 (PHLPI) (Phleum pratense (Common timothy)).